We begin with the raw amino-acid sequence, 484 residues long: Probable sphingolipid transporter spinster homolog 2 (484 aa).

A disordered region spans residues Met1 to Ile23. A helical membrane pass occupies residues Leu38–Ser58. Residues Asn62 and Asn85 are each glycosylated (N-linked (GlcNAc...) asparagine). 11 helical membrane-spanning segments follow: residues Val93 to Ala113, Ile122 to Phe142, Ile147 to Ile167, Ala181 to Val201, Ala209 to Lys229, Val273 to Tyr293, Ile311 to Leu331, Leu345 to Phe362, Leu377 to Ser397, Met405 to Leu425, and Ser436 to Leu456. The residue at position 466 (Ser466) is a Phosphoserine.

Belongs to the major facilitator superfamily. Spinster (TC 2.A.1.49) family.

The protein localises to the late endosome membrane. It localises to the lysosome membrane. Functionally, probable sphingolipid transporter that plays a central role in endosomes and/or lysosomes storage. This is Probable sphingolipid transporter spinster homolog 2 from Arabidopsis thaliana (Mouse-ear cress).